A 378-amino-acid chain; its full sequence is N-acetyllactosaminide beta-1,3-N-acetylglucosaminyltransferase 4 (378 aa).

Topologically, residues 1 to 28 are cytoplasmic; sequence MLPPQPSAAHQGRGGRSGLLPKGPAMLC. Residues 29 to 49 form a helical; Signal-anchor for type II membrane protein membrane-spanning segment; that stretch reads RLCWLVSYSLAVLLLGCLLFL. At 50-378 the chain is on the lumenal side; the sequence is RKAAKPAGDP…KCAAGPIPQR (329 aa). The tract at residues 59–81 is disordered; sequence PTAHQPFWAPPTPRHSRCPPNHT. N-linked (GlcNAc...) asparagine glycosylation occurs at asparagine 192.

This sequence belongs to the glycosyltransferase 31 family. In terms of tissue distribution, mainly expressed in brain tissues such as whole brain, hippocampus, amygdala, cerebellum and caudate nucleus. Also expressed in colon, esophagus and kidney.

The protein resides in the golgi apparatus membrane. It carries out the reaction a beta-D-galactosyl-(1-&gt;4)-N-acetyl-beta-D-glucosaminyl derivative + UDP-N-acetyl-alpha-D-glucosamine = an N-acetyl-beta-D-glucosaminyl-(1-&gt;3)-beta-D-galactosyl-(1-&gt;4)-N-acetyl-beta-D-glucosaminyl derivative + UDP + H(+). The protein operates within protein modification; protein glycosylation. Its function is as follows. Beta-1,3-N-acetylglucosaminyltransferase involved in the synthesis of poly-N-acetyllactosamine. Has activity for type 2 oligosaccharides. This chain is N-acetyllactosaminide beta-1,3-N-acetylglucosaminyltransferase 4 (B3GNT4), found in Homo sapiens (Human).